The chain runs to 193 residues: ATP-dependent Clp protease proteolytic subunit 1 (193 aa).

S98 serves as the catalytic Nucleophile. Residue H123 is part of the active site.

Belongs to the peptidase S14 family. In terms of assembly, fourteen ClpP subunits assemble into 2 heptameric rings which stack back to back to give a disk-like structure with a central cavity, resembling the structure of eukaryotic proteasomes.

Its subcellular location is the cytoplasm. The enzyme catalyses Hydrolysis of proteins to small peptides in the presence of ATP and magnesium. alpha-casein is the usual test substrate. In the absence of ATP, only oligopeptides shorter than five residues are hydrolyzed (such as succinyl-Leu-Tyr-|-NHMec, and Leu-Tyr-Leu-|-Tyr-Trp, in which cleavage of the -Tyr-|-Leu- and -Tyr-|-Trp bonds also occurs).. Its function is as follows. Cleaves peptides in various proteins in a process that requires ATP hydrolysis. Has a chymotrypsin-like activity. Plays a major role in the degradation of misfolded proteins. The chain is ATP-dependent Clp protease proteolytic subunit 1 from Bacillus cereus (strain ATCC 10987 / NRS 248).